The following is a 297-amino-acid chain: MEEPALVEGQSQLPSPHHNSLRKAMAAALVLDGESTMGRRKKKKKESRPESIIIYRSESETLDEEPGESEGGDQPKEEEGDDFIDYPMDDGVWNVPVDSRYVTLTGTITRGKKKGQMVDIHVTLTEKELQELTKPKASSRETTPGGRKACQLGADRGPHVVLWTLVCLPVVFLLSFVVSFYYGTITWYNIFLVYNEERTFWHKISCCPCLILCYPVLIMAMASSLGLYAAVVQLSWSWEAWWQAARDMEKGFCGWLCSKLGLEDCSPYSIVELLESDNISGNLSNKDATQEIETSAV.

Positions 1-84 are disordered; sequence MEEPALVEGQ…PKEEEGDDFI (84 aa). Over 1–159 the chain is Extracellular; sequence MEEPALVEGQ…CQLGADRGPH (159 aa). A compositionally biased stretch (polar residues) spans 9–18; sequence GQSQLPSPHH. Residues 60–84 are compositionally biased toward acidic residues; the sequence is ETLDEEPGESEGGDQPKEEEGDDFI. The chain crosses the membrane as a helical span at residues 160-180; the sequence is VVLWTLVCLPVVFLLSFVVSF. The Cytoplasmic portion of the chain corresponds to 181 to 210; it reads YYGTITWYNIFLVYNEERTFWHKISCCPCL. Residues 211 to 231 form a helical membrane-spanning segment; it reads ILCYPVLIMAMASSLGLYAAV. The Extracellular segment spans residues 232 to 297; that stretch reads VQLSWSWEAW…ATQEIETSAV (66 aa).

The protein resides in the membrane. The sequence is that of Transmembrane protein 169 (TMEM169) from Bos taurus (Bovine).